We begin with the raw amino-acid sequence, 663 residues long: Transketolase 2 (663 aa).

His25 provides a ligand contact to substrate. Residues His65 and 113–115 (GPL) contribute to the thiamine diphosphate site. Asp154 lines the Mg(2+) pocket. Gly155 and Asn184 together coordinate thiamine diphosphate. Residues Asn184 and Ile186 each contribute to the Mg(2+) site. Residues His259, Arg356, and Ser383 each contribute to the substrate site. A thiamine diphosphate-binding site is contributed by His259. Residue Glu410 is the Proton donor of the active site. Phe436 contributes to the thiamine diphosphate binding site. His460, Asp468, and Arg519 together coordinate substrate.

It belongs to the transketolase family. In terms of assembly, homodimer. Requires Mg(2+) as cofactor. Ca(2+) is required as a cofactor. Mn(2+) serves as cofactor. The cofactor is Co(2+). It depends on thiamine diphosphate as a cofactor.

It carries out the reaction D-sedoheptulose 7-phosphate + D-glyceraldehyde 3-phosphate = aldehydo-D-ribose 5-phosphate + D-xylulose 5-phosphate. Catalyzes the transfer of a two-carbon ketol group from a ketose donor to an aldose acceptor, via a covalent intermediate with the cofactor thiamine pyrophosphate. This Vibrio vulnificus (strain CMCP6) protein is Transketolase 2 (tkt2).